A 572-amino-acid polypeptide reads, in one-letter code: NADP-dependent malic enzyme (572 aa).

The residue at position 1 (Met-1) is an N-acetylmethionine. The Proton donor role is filled by Tyr-102. Position 155 (Arg-155) interacts with NADP(+). The Proton acceptor role is filled by Lys-173. 3 residues coordinate a divalent metal cation: Glu-245, Asp-246, and Asp-269. NADP(+)-binding positions include Asp-269 and Gly-301–Glu-318. Ser-336 is subject to Phosphoserine. Position 408 (Asn-408) interacts with NADP(+).

Belongs to the malic enzymes family. Homotetramer. Mg(2+) serves as cofactor. Requires Mn(2+) as cofactor. In terms of tissue distribution, ubiquitous. Up-regulated by 3,5,3'-triiodo-L-thyronine in the liver, kidney and heart.

Its subcellular location is the cytoplasm. The catalysed reaction is (S)-malate + NADP(+) = pyruvate + CO2 + NADPH. The enzyme catalyses oxaloacetate + H(+) = pyruvate + CO2. In terms of biological role, catalyzes the oxidative decarboxylation of (S)-malate in the presence of NADP(+) and divalent metal ions, and decarboxylation of oxaloacetate. The polypeptide is NADP-dependent malic enzyme (Me1) (Rattus norvegicus (Rat)).